We begin with the raw amino-acid sequence, 577 residues long: Proline--tRNA ligase (577 aa).

Belongs to the class-II aminoacyl-tRNA synthetase family. ProS type 1 subfamily. As to quaternary structure, homodimer.

Its subcellular location is the cytoplasm. The enzyme catalyses tRNA(Pro) + L-proline + ATP = L-prolyl-tRNA(Pro) + AMP + diphosphate. In terms of biological role, catalyzes the attachment of proline to tRNA(Pro) in a two-step reaction: proline is first activated by ATP to form Pro-AMP and then transferred to the acceptor end of tRNA(Pro). As ProRS can inadvertently accommodate and process non-cognate amino acids such as alanine and cysteine, to avoid such errors it has two additional distinct editing activities against alanine. One activity is designated as 'pretransfer' editing and involves the tRNA(Pro)-independent hydrolysis of activated Ala-AMP. The other activity is designated 'posttransfer' editing and involves deacylation of mischarged Ala-tRNA(Pro). The misacylated Cys-tRNA(Pro) is not edited by ProRS. This chain is Proline--tRNA ligase, found in Marinobacter nauticus (strain ATCC 700491 / DSM 11845 / VT8) (Marinobacter aquaeolei).